The primary structure comprises 567 residues: MKFTKLYVPTTKEAPKDATLPSHQFLIRAGFVAQIGSGLYNFLPLGKRVLRKVENIVRDEMDKAGANEVALSFVVPGELWKQSRRYFKFGKELLRLKDRKDNDFLLAPTHEESIVDLVRDKVTSYKQLPLHLYQIGLKFRDEARPRFGLLRCREFIMKDGYSFHASEADLKREFDLMETTYTKIFSRLGLNFRAVEADSGAIGGSGSKEFMVLAKNGEDDILISDASNYAANIEAAKRAKRVCKAERPQSNSMQKFFTPGCSSIAKVTEFFKVDPFYTIKAVMKKAIYEDSEKIVVFFVRGDDELQEVKACNACSALELSDASEEEVIAAGLVPGYCGPVGLHENIDFYIDNELENEKEMICGANEKDYHAIGVNIINFNKDRFKDLAEVKAGDKALDGGVLSVTKGIEVGHIFQLGVRYSETMGATFLDENGKSKPFFMGCYGIGVSRLVAVMVEASHDEKGCIWKKECAPFMVHIIVSNIKDTEQMQFALNLESNLESSGVEVLLDDRNERFGVKMADFELIGVPFGVVVGKGLQNAEVEFIKRDGLEKVKVSSDEILGKLKEII.

This sequence belongs to the class-II aminoacyl-tRNA synthetase family. ProS type 1 subfamily. As to quaternary structure, homodimer.

The protein localises to the cytoplasm. It catalyses the reaction tRNA(Pro) + L-proline + ATP = L-prolyl-tRNA(Pro) + AMP + diphosphate. In terms of biological role, catalyzes the attachment of proline to tRNA(Pro) in a two-step reaction: proline is first activated by ATP to form Pro-AMP and then transferred to the acceptor end of tRNA(Pro). As ProRS can inadvertently accommodate and process non-cognate amino acids such as alanine and cysteine, to avoid such errors it has two additional distinct editing activities against alanine. One activity is designated as 'pretransfer' editing and involves the tRNA(Pro)-independent hydrolysis of activated Ala-AMP. The other activity is designated 'posttransfer' editing and involves deacylation of mischarged Ala-tRNA(Pro). The misacylated Cys-tRNA(Pro) is not edited by ProRS. The polypeptide is Proline--tRNA ligase (Campylobacter fetus subsp. fetus (strain 82-40)).